The following is a 267-amino-acid chain: MYLELVKKNSVILDKDGNKVKEVELPFIFSFPVRKDIIRRVFLAEFTHSLQPKGRDPMAGKRTSAESFGINLGMARVPRVKNSGEAALAPNTVGGRLTFPPSVDKKLVEEVNDKEKQLAVISALSATADKVFVKARGHVFKDSVSFPIVVTDDIVSLKTASEVEEFLEKIGVYDDVKRVKERIRIRAGKGKMRGRKYKESIGPLIIVHDSNSPIVKAARNIAGVDVVNAKDVSVIHLAPGAHSGRLTIYTETSIKILDERLSKRLVS.

It belongs to the universal ribosomal protein uL4 family. Part of the 50S ribosomal subunit.

In terms of biological role, one of the primary rRNA binding proteins, this protein initially binds near the 5'-end of the 23S rRNA. It is important during the early stages of 50S assembly. It makes multiple contacts with different domains of the 23S rRNA in the assembled 50S subunit and ribosome. Its function is as follows. Forms part of the polypeptide exit tunnel. In Saccharolobus islandicus (strain Y.N.15.51 / Yellowstone #2) (Sulfolobus islandicus), this protein is Large ribosomal subunit protein uL4.